The following is a 261-amino-acid chain: Carboxy-terminal domain RNA polymerase II polypeptide A small phosphatase 1 (261 aa).

M1 is modified (N-acetylmethionine). Residues 1–10 (MDSSAVITQI) are compositionally biased toward polar residues. The interval 1–33 (MDSSAVITQISKEEARGPLRGKGDQKSAASQKP) is disordered. Over residues 11–25 (SKEEARGPLRGKGDQ) the composition is skewed to basic and acidic residues. The region spanning 86 to 244 (QDSDKICVVI…HDLLPFFEQL (159 aa)) is the FCP1 homology domain. The 4-aspartylphosphate intermediate role is filled by D96. Positions 96, 98, and 207 each coordinate Mg(2+). D98 functions as the Proton donor in the catalytic mechanism.

In terms of assembly, monomer. Interacts with GTF2F1. Interacts with REST. Requires Mg(2+) as cofactor. In terms of tissue distribution, expression is restricted to non-neuronal tissues. Highest expression in skeletal muscle, spleen, lung and placenta.

The protein localises to the nucleus. It catalyses the reaction O-phospho-L-seryl-[protein] + H2O = L-seryl-[protein] + phosphate. It carries out the reaction O-phospho-L-threonyl-[protein] + H2O = L-threonyl-[protein] + phosphate. Stimulated by GTF2F1. Inhibited by beryllofluoride anions. Preferentially catalyzes the dephosphorylation of 'Ser-5' within the tandem 7 residue repeats in the C-terminal domain (CTD) of the largest RNA polymerase II subunit POLR2A. Negatively regulates RNA polymerase II transcription, possibly by controlling the transition from initiation/capping to processive transcript elongation. Recruited by REST to neuronal genes that contain RE-1 elements, leading to neuronal gene silencing in non-neuronal cells. This Homo sapiens (Human) protein is Carboxy-terminal domain RNA polymerase II polypeptide A small phosphatase 1 (CTDSP1).